Reading from the N-terminus, the 69-residue chain is U2-agatoxin-Ao1g (69 aa).

An N-terminal signal peptide occupies residues 1–20 (MKAIISLLLISAMVFSMIEA). The propeptide occupies 21–34 (VPVEEGLQLFEGER). 3 cysteine pairs are disulfide-bonded: cysteine 36–cysteine 52, cysteine 43–cysteine 57, and cysteine 51–cysteine 67. Leucine 68 bears the Leucine amide mark.

This sequence belongs to the neurotoxin 01 (U2-agtx) family. Expressed by the venom gland.

It localises to the secreted. Its function is as follows. Insect active toxin causing rapid but reversible paralysis in crickets. No activity shown in mammals. Does not show effect on mammalian voltage-gated calcium channels. This Agelena orientalis (Funnel-web spider) protein is U2-agatoxin-Ao1g.